Here is a 635-residue protein sequence, read N- to C-terminus: Threonine--tRNA ligase (635 aa).

The region spanning 1-61 (MIVITLPDGS…EGDARLAIVT (61 aa)) is the TGS domain. The segment at 242 to 533 (DHRKLGRELD…LIEQHAGALP (292 aa)) is catalytic. The Zn(2+) site is built by C333, H384, and H510.

Belongs to the class-II aminoacyl-tRNA synthetase family. Homodimer. Zn(2+) is required as a cofactor.

Its subcellular location is the cytoplasm. It carries out the reaction tRNA(Thr) + L-threonine + ATP = L-threonyl-tRNA(Thr) + AMP + diphosphate + H(+). Catalyzes the attachment of threonine to tRNA(Thr) in a two-step reaction: L-threonine is first activated by ATP to form Thr-AMP and then transferred to the acceptor end of tRNA(Thr). Also edits incorrectly charged L-seryl-tRNA(Thr). This is Threonine--tRNA ligase from Methylibium petroleiphilum (strain ATCC BAA-1232 / LMG 22953 / PM1).